Reading from the N-terminus, the 469-residue chain is Probable glucuronoxylan glucuronosyltransferase F8H (469 aa).

Residues 1 to 36 (MSLDIKKPNITKTKKKKTGFVVKMQLNNNRGGNKRN) are Cytoplasmic-facing. Residues 37–57 (IFIFFFFRNYYTWILWFCLSL) traverse the membrane as a helical; Signal-anchor for type II membrane protein segment. Topologically, residues 58-469 (YFFTSYFSVE…RVLSQREVDM (412 aa)) are lumenal. Residues Asn-171, Asn-203, Asn-301, and Asn-411 are each glycosylated (N-linked (GlcNAc...) asparagine).

This sequence belongs to the glycosyltransferase 47 family. Expressed in xylem cells in stems and in roots.

Its subcellular location is the golgi apparatus membrane. In terms of biological role, involved in the synthesis of the hemicellulose glucuronoxylan, a major component of secondary cell walls. Probably involved in the synthesis of the glycosyl sequence at the glucuronoxylan reducing end. This chain is Probable glucuronoxylan glucuronosyltransferase F8H (F8H), found in Arabidopsis thaliana (Mouse-ear cress).